Reading from the N-terminus, the 146-residue chain is Transcriptional regulator MraZ (146 aa).

SpoVT-AbrB domains are found at residues 7-54 (HVTN…GPEL) and 83-126 (GVYV…DPQA).

Belongs to the MraZ family. As to quaternary structure, forms oligomers.

It is found in the cytoplasm. It localises to the nucleoid. The sequence is that of Transcriptional regulator MraZ from Rhizobium meliloti (strain 1021) (Ensifer meliloti).